Consider the following 405-residue polypeptide: Glucose-1-phosphate adenylyltransferase 1 (405 aa).

Alpha-D-glucose 1-phosphate is bound by residues Tyr-96, Gly-161, 176–177 (EK), and Ser-194.

It belongs to the bacterial/plant glucose-1-phosphate adenylyltransferase family. As to quaternary structure, homotetramer.

The catalysed reaction is alpha-D-glucose 1-phosphate + ATP + H(+) = ADP-alpha-D-glucose + diphosphate. It functions in the pathway glycan biosynthesis; glycogen biosynthesis. Its function is as follows. Involved in the biosynthesis of ADP-glucose, a building block required for the elongation reactions to produce glycogen. Catalyzes the reaction between ATP and alpha-D-glucose 1-phosphate (G1P) to produce pyrophosphate and ADP-Glc. In Vibrio vulnificus (strain YJ016), this protein is Glucose-1-phosphate adenylyltransferase 1.